A 378-amino-acid chain; its full sequence is 1-acyl-sn-glycerol-3-phosphate acyltransferase delta (378 aa).

Residues 11-31 (FLCHLVFCYVFIASGLIINTI) form a helical membrane-spanning segment. Residues 96–101 (HKFEID) carry the HXXXXD motif motif. The next 3 membrane-spanning stretches (helical) occupy residues 125–145 (ELAYVPIIGWMWYFTEMVFCS), 307–327 (TLVNWLFWASLVLYPFFQFLV), and 338–358 (LASFILVFFVASVGVRWMIGV).

It belongs to the 1-acyl-sn-glycerol-3-phosphate acyltransferase family. As to expression, widely expressed with highest levels in skeletal muscle, followed by heart, liver, prostate and thymus.

It localises to the endoplasmic reticulum membrane. It catalyses the reaction a 1-acyl-sn-glycero-3-phosphate + an acyl-CoA = a 1,2-diacyl-sn-glycero-3-phosphate + CoA. The enzyme catalyses (4Z,7Z,10Z,13Z,16Z,19Z)-docosahexaenoyl-CoA + 1-hexadecanoyl-sn-glycero-3-phosphate = 1-hexadecanoyl-2-(4Z,7Z,10Z,13Z,16Z,19Z-docosahexaenoyl)-sn-glycero-3-phosphate + CoA. The catalysed reaction is 1-octadecanoyl-sn-glycero-3-phosphate + (9Z,12Z)-octadecadienoyl-CoA = 1-octadecanoyl-2-(9Z,12Z-octadecadienoyl)-sn-glycero-3-phosphate + CoA. It carries out the reaction 1-octadecanoyl-sn-glycero-3-phosphate + (4Z,7Z,10Z,13Z,16Z,19Z)-docosahexaenoyl-CoA = 1-octadecanoyl-2-(4Z,7Z,10Z,13Z,16Z,19Z-docosahexaenoyl)-sn-glycero-3-phosphate + CoA. It catalyses the reaction (4Z,7Z,10Z,13Z,16Z,19Z)-docosahexaenoyl-CoA + 1-(9Z-octadecenoyl)-sn-glycero-3-phosphate = 1-(9Z-octadecenoyl)-2-(4Z,7Z,10Z,13Z,16Z,19Z-docosahexaenoyl)-sn-glycero-3-phosphate + CoA. The protein operates within phospholipid metabolism; CDP-diacylglycerol biosynthesis; CDP-diacylglycerol from sn-glycerol 3-phosphate: step 2/3. Converts 1-acyl-sn-glycerol-3-phosphate (lysophosphatidic acid or LPA) into 1,2-diacyl-sn-glycerol-3-phosphate (phosphatidic acid or PA) by incorporating an acyl moiety at the sn-2 position of the glycerol backbone. Exhibits high acyl-CoA specificity for polyunsaturated fatty acyl-CoA, especially docosahexaenoyl-CoA (22:6-CoA, DHA-CoA). The polypeptide is 1-acyl-sn-glycerol-3-phosphate acyltransferase delta (AGPAT4) (Homo sapiens (Human)).